Reading from the N-terminus, the 801-residue chain is Probable phosphoketolase (801 aa).

Belongs to the XFP family. Thiamine diphosphate is required as a cofactor.

This Bradyrhizobium diazoefficiens (strain JCM 10833 / BCRC 13528 / IAM 13628 / NBRC 14792 / USDA 110) protein is Probable phosphoketolase.